The following is a 482-amino-acid chain: Membrane-bound lytic murein transglycosylase F (482 aa).

A signal peptide spans 1 to 13; sequence MKGLFLRIITALA. The tract at residues 14–267 is non-LT domain; the sequence is LLFWAIDMVF…NLKEKYLGHI (254 aa). The segment at 268–482 is LT domain; it reads SQFDYVDTRS…NLEEIKENKD (215 aa). The active site involves Glu312.

It in the N-terminal section; belongs to the bacterial solute-binding protein 3 family. This sequence in the C-terminal section; belongs to the transglycosylase Slt family.

It is found in the cell outer membrane. The enzyme catalyses Exolytic cleavage of the (1-&gt;4)-beta-glycosidic linkage between N-acetylmuramic acid (MurNAc) and N-acetylglucosamine (GlcNAc) residues in peptidoglycan, from either the reducing or the non-reducing ends of the peptidoglycan chains, with concomitant formation of a 1,6-anhydrobond in the MurNAc residue.. In terms of biological role, murein-degrading enzyme that degrades murein glycan strands and insoluble, high-molecular weight murein sacculi, with the concomitant formation of a 1,6-anhydromuramoyl product. Lytic transglycosylases (LTs) play an integral role in the metabolism of the peptidoglycan (PG) sacculus. Their lytic action creates space within the PG sacculus to allow for its expansion as well as for the insertion of various structures such as secretion systems and flagella. In Haemophilus influenzae (strain PittEE), this protein is Membrane-bound lytic murein transglycosylase F.